The primary structure comprises 792 residues: 5-methyltetrahydropteroyltriglutamate--homocysteine methyltransferase (792 aa).

Residues 16-19 (RELK) and Lys-112 each bind 5-methyltetrahydropteroyltri-L-glutamate. Residues 432 to 434 (IGS) and Glu-485 each bind L-homocysteine. Residues 432-434 (IGS) and Glu-485 contribute to the L-methionine site. Residues 516–517 (RC) and Trp-562 contribute to the 5-methyltetrahydropteroyltri-L-glutamate site. Asp-600 is a binding site for L-homocysteine. Asp-600 is an L-methionine binding site. Glu-606 is a 5-methyltetrahydropteroyltri-L-glutamate binding site. Zn(2+)-binding residues include His-642, Cys-644, and Glu-666. Residue His-695 is the Proton donor of the active site. Cys-727 lines the Zn(2+) pocket.

It belongs to the vitamin-B12 independent methionine synthase family. It depends on Zn(2+) as a cofactor.

The enzyme catalyses 5-methyltetrahydropteroyltri-L-glutamate + L-homocysteine = tetrahydropteroyltri-L-glutamate + L-methionine. It participates in amino-acid biosynthesis; L-methionine biosynthesis via de novo pathway; L-methionine from L-homocysteine (MetE route): step 1/1. In terms of biological role, catalyzes the transfer of a methyl group from 5-methyltetrahydrofolate to homocysteine resulting in methionine formation. The protein is 5-methyltetrahydropteroyltriglutamate--homocysteine methyltransferase of Cupriavidus necator (strain ATCC 17699 / DSM 428 / KCTC 22496 / NCIMB 10442 / H16 / Stanier 337) (Ralstonia eutropha).